The chain runs to 117 residues: NADH-ubiquinone oxidoreductase chain 3 (117 aa).

The next 3 membrane-spanning stretches (helical) occupy residues 1 to 21 (MKFI…LLLL), 58 to 78 (FLMT…LPII), and 86 to 106 (TMIS…TLIL).

The protein belongs to the complex I subunit 3 family.

The protein localises to the mitochondrion membrane. It carries out the reaction a ubiquinone + NADH + 5 H(+)(in) = a ubiquinol + NAD(+) + 4 H(+)(out). Functionally, core subunit of the mitochondrial membrane respiratory chain NADH dehydrogenase (Complex I) that is believed to belong to the minimal assembly required for catalysis. Complex I functions in the transfer of electrons from NADH to the respiratory chain. The immediate electron acceptor for the enzyme is believed to be ubiquinone. The chain is NADH-ubiquinone oxidoreductase chain 3 (ND3) from Apis mellifera ligustica (Common honeybee).